Here is a 125-residue protein sequence, read N- to C-terminus: Holo-[acyl-carrier-protein] synthase (125 aa).

Residues Asp8 and Glu57 each coordinate Mg(2+).

Belongs to the P-Pant transferase superfamily. AcpS family. It depends on Mg(2+) as a cofactor.

Its subcellular location is the cytoplasm. The enzyme catalyses apo-[ACP] + CoA = holo-[ACP] + adenosine 3',5'-bisphosphate + H(+). In terms of biological role, transfers the 4'-phosphopantetheine moiety from coenzyme A to a Ser of acyl-carrier-protein. The protein is Holo-[acyl-carrier-protein] synthase of Nitrosomonas eutropha (strain DSM 101675 / C91 / Nm57).